The sequence spans 148 residues: Ubiquitin-conjugating enzyme E2 30 (148 aa).

The region spanning 1 to 147 (MASKRINKEL…AQSWTQKYAM (147 aa)) is the UBC core domain. C85 acts as the Glycyl thioester intermediate in catalysis.

The protein belongs to the ubiquitin-conjugating enzyme family. As to quaternary structure, interacts with RGLG3 and RGLG4. In terms of tissue distribution, ubiquitously expressed at very low levels.

The enzyme catalyses S-ubiquitinyl-[E1 ubiquitin-activating enzyme]-L-cysteine + [E2 ubiquitin-conjugating enzyme]-L-cysteine = [E1 ubiquitin-activating enzyme]-L-cysteine + S-ubiquitinyl-[E2 ubiquitin-conjugating enzyme]-L-cysteine.. Its pathway is protein modification; protein ubiquitination. Its function is as follows. Accepts the ubiquitin from the E1 complex and catalyzes its covalent attachment to other proteins. The chain is Ubiquitin-conjugating enzyme E2 30 (UBC30) from Arabidopsis thaliana (Mouse-ear cress).